A 127-amino-acid polypeptide reads, in one-letter code: Fluoride-specific ion channel FluC (127 aa).

4 helical membrane passes run 7–27, 37–57, 69–89, and 102–122; these read LILI…MGLI, FGTL…MAMI, LFMI…SAEV, and LGIM…GVLI. 2 residues coordinate Na(+): G77 and T80.

Belongs to the fluoride channel Fluc/FEX (TC 1.A.43) family.

Its subcellular location is the cell inner membrane. It catalyses the reaction fluoride(in) = fluoride(out). Na(+) is not transported, but it plays an essential structural role and its presence is essential for fluoride channel function. Its function is as follows. Fluoride-specific ion channel. Important for reducing fluoride concentration in the cell, thus reducing its toxicity. The chain is Fluoride-specific ion channel FluC from Mannheimia succiniciproducens (strain KCTC 0769BP / MBEL55E).